We begin with the raw amino-acid sequence, 1491 residues long: CLIP-associating protein (1491 aa).

4 HEAT repeats span residues 44 to 82 (CTDMGFLIDGLMPWLTGSHFKIAQKSLEAFSELIKRLGS), 85 to 123 (NAYTATVLPHVIDRLGDSRDTVREKAQLLLRDLMEHRVL), 163 to 201 (QLSVRVYIPPVCALLGDPTVNVREAAIQTLVEIYKHVGD), and 402 to 440 (DAFCWSILEHLINLIQNSAKVIASASTIALKYIIKYTHA). 2 disordered regions span residues 537 to 586 (RERE…AVDT) and 600 to 739 (LYSR…NNPV). Residues 542-551 (GGGGGTGTGT) are compositionally biased toward gly residues. Positions 569–580 (GTLQKPTPSMRS) are enriched in polar residues. Ser-582, Ser-626, and Ser-634 each carry phosphoserine. Over residues 632–646 (LNSNSGGTPATTPGS) the composition is skewed to polar residues. Position 648 is a phosphothreonine (Thr-648). Composition is skewed to polar residues over residues 657–671 (VSQSQPGSRSTSPST) and 699–712 (PRSTASSRETSPTR). A phosphoserine mark is found at Ser-806, Ser-817, Ser-820, Ser-822, and Ser-824. 2 HEAT repeats span residues 874–912 (QQQLKCVLDMFRKMFMDTHTKVYSLFLDTVTELILVHAN) and 955–993 (QLQLKELFRIISDSTQTPTTKTRIAILRFLTDLANTYCK). Disordered stretches follow at residues 1065–1127 (HMRR…SVEQ) and 1167–1205 (GHLQYHDQGQQDSCASLSSNSKTQSSANTTQSNTPESAT). Composition is skewed to low complexity over residues 1070 to 1097 (SQSCNSGANSPSSSPLSSSSPKPLQSPS), 1111 to 1124 (LSISSTSPRSRQSS), and 1181 to 1200 (ASLSSNSKTQSSANTTQSNT). Phosphoserine occurs at positions 1120, 1123, and 1124. HEAT repeat units lie at residues 1289-1327 (NKHFRSIMRMLLNILEAEHTDVVIAGLHVLSKIMRSNKM) and 1408-1446 (DAHLDIVFPNLARSADDTQSMVRKAAVFCIVKLYFVLGE).

This sequence belongs to the CLASP family. In terms of assembly, interacts with CLIP-190 and microtubules. As to expression, expressed in testis and ovary.

It localises to the cytoplasm. The protein resides in the cytoskeleton. The protein localises to the nucleus. It is found in the microtubule organizing center. Its subcellular location is the centrosome. It localises to the spindle. The protein resides in the cell projection. The protein localises to the growth cone. It is found in the cleavage furrow. Functionally, microtubule plus-end tracking protein that promotes the stabilization of dynamic microtubules. Required for several aspects of mitotic spindle formation including the formation of the overlapping central spindle microtubules and kinetochore attachment. Required for the incorporation of tubulin subunits at the plus ends of kinetochore microtubules during poleward microtubule flux. Acts antagonistically to Klp10A and Klp67A to maintain metaphase spindle length. Also required for guidance of CNS axons downstream of Abl. May function to identify a subset of microtubules that probe the peripheral growth cone domain, where guidance signals exert their influence on cytoskeletal organization. Also required during oogenesis for the organization of the polarized microtubule network inside the 16-cell cyst that ensures oocyte differentiation. This Drosophila melanogaster (Fruit fly) protein is CLIP-associating protein (chb).